We begin with the raw amino-acid sequence, 635 residues long: Protein OPG056 (635 aa).

Belongs to the orthopoxvirus OPG056 family. Interacts with protein OPG164. Interacts with protein OPG064.

It is found in the virion membrane. The protein localises to the host endosome. In terms of biological role, plays a role in intracellular enveloped virus (IEV) transport to the cell surface through microtubule transport. Together with protein OPG064, forms a complex that interacts with host KLC2 (kinesin light chain isoform 2) to engage the kinesin-1 complex and thereby promote IEV trafficking. The protein is Protein OPG056 (OPG056) of Variola virus (isolate Human/India/Ind3/1967) (VARV).